The sequence spans 268 residues: MERYENLFAQLNDRREGAFVPFVTLGDPGIEQSLKIIDTLIDAGANALELGVPFSDPLADGPTIQNANLRAFAAGVTPAQCFEMLALIREKHPTIPIGLLMYANLVFNNGIDAFYARCEQVGVDSVLVADVPVEESAPFRQAALRHNIAPIFICPPNADDDLLRQVASYGRGYTYLLSRSGVTGAENRGALPLHHLIEKLKEYHAAPALQGFGISSPEQVSAAVRAGAAGAISGSAIVKIIEKNLASPEQMLAELRSFVSAMKAASRA.

Catalysis depends on proton acceptor residues E49 and D60.

This sequence belongs to the TrpA family. Tetramer of two alpha and two beta chains.

The catalysed reaction is (1S,2R)-1-C-(indol-3-yl)glycerol 3-phosphate + L-serine = D-glyceraldehyde 3-phosphate + L-tryptophan + H2O. It functions in the pathway amino-acid biosynthesis; L-tryptophan biosynthesis; L-tryptophan from chorismate: step 5/5. The alpha subunit is responsible for the aldol cleavage of indoleglycerol phosphate to indole and glyceraldehyde 3-phosphate. In Salmonella paratyphi A (strain ATCC 9150 / SARB42), this protein is Tryptophan synthase alpha chain.